Here is an 879-residue protein sequence, read N- to C-terminus: MTLLTSSLLLFSLLTSRLEAIPVLEKSPAHPAHSAHPAHPSHPSPGVRILRAPESLVAPLGDEVVLECETSLQPERFEWSHRSSRSQGAGFKYLRTGTAKANVSQEAAISRLRVLVREDTLGEYRCVGWFGPLVVTSTIARLELASTSLVGAQESESPLQWRVAAGNSVLWSCGQQVQSNPSASWSYYRNGVEIKPEFIGTNGNLILSNVSSESSGSYSCQATNPASGERIQLPGLLQLQVTPEQRSLSKSPHLLKGQPSSQEITIREGSSLLLLCPGVGSPPPTVVWSSPDVVGAVKNKRSKVFGHALEISDTRVQDAGTYICFQDNGVRPALEHYIKVHVEQPPQIVRPPWADLTNEGDRLKLECEATGVPSPEIYWLLNGHSSIDDTEAELSNNFLILHSVLKRHAGYVQCFARNRLGEHSAGTLLQVNPKQIQEPRESGGTHRPKPNQGSKQKQMYPPSPPNVTRLSDESVMLRWMVPRNDGLPIVIFKVQYRMVGKRKNWQTTNDNIPYGKPKWNSELGKSFTASVTDLKPQHTYRFRILAVYSNNDNKESNTSAKFYLQPGAALDPMPVPELLEIEEYSETAVVLHWSLASDADEHLITGYYAYYRPSSSAGEYFKATIEGAHARSFKIAPLETATMYEFKLQSFSAVSASEFSALKQGRTQRPKTSTTEEPTLQMGDRDTTTPSHNETFNMSPMLTGTLGGGAVLTLLLISICLCVCRRRSSRSRGNNPNKPRMAELRDDFVPLGNCSPTKQRQRTRHIHITLNPLAQQQQGMEEKNDTDQDAPYYQRPSSYDYDPGLRRMSSSSLRRSQRTLERAGGSNGSNNGNNNNLNQSTETGPVENPGKPGRVLMKRPRLSSRSENLSSGSLNSVGV.

Positions 1–20 (MTLLTSSLLLFSLLTSRLEA) are cleaved as a signal peptide. Residues 21-703 (IPVLEKSPAH…ETFNMSPMLT (683 aa)) lie on the Extracellular side of the membrane. Ig-like C2-type domains are found at residues 45–142 (PGVR…IARL), 132–232 (PLVV…ERIQ), 252–340 (PHLL…YIKV), and 346–432 (PQIV…LQVN). Cystine bridges form between Cys-68/Cys-126, Cys-173/Cys-220, Cys-276/Cys-324, and Cys-367/Cys-414. Residues Asn-102 and Asn-209 are each glycosylated (N-linked (GlcNAc...) asparagine). The tract at residues 426 to 467 (GTLLQVNPKQIQEPRESGGTHRPKPNQGSKQKQMYPPSPPNV) is disordered. 2 consecutive Fibronectin type-III domains span residues 461 to 567 (PPSP…LQPG) and 575 to 670 (VPEL…TQRP). An N-linked (GlcNAc...) asparagine glycan is attached at Asn-466. Heparin-binding residues include Arg-497, Lys-501, Lys-503, and Arg-541. Asn-557 carries an N-linked (GlcNAc...) asparagine glycan. Positions 662 to 698 (LKQGRTQRPKTSTTEEPTLQMGDRDTTTPSHNETFNM) are disordered. Composition is skewed to polar residues over residues 665–678 (GRTQ…TEEP) and 688–698 (TTPSHNETFNM). An N-linked (GlcNAc...) asparagine glycan is attached at Asn-693. A helical transmembrane segment spans residues 704–724 (GTLGGGAVLTLLLISICLCVC). Residues 725–879 (RRRSSRSRGN…SSGSLNSVGV (155 aa)) lie on the Cytoplasmic side of the membrane. The tract at residues 728 to 879 (SSRSRGNNPN…SSGSLNSVGV (152 aa)) is disordered. 2 stretches are compositionally biased toward low complexity: residues 822–836 (RAGG…NNNN) and 863–879 (SSRS…SVGV).

The protein belongs to the immunoglobulin superfamily. IHOG family. Homodimer. Heterotetramer; 2 iHog chains bind 2 hh chains when facilitated by heparin, heparin is required to promote high-affinity interactions between hh and iHog.

The protein localises to the membrane. In terms of biological role, mediates response to the active Hedgehog (Hh) protein signal in embryos, functioning upstream or at the level of patched (ptc). The chain is Interference hedgehog from Drosophila erecta (Fruit fly).